Consider the following 351-residue polypeptide: RCC1 repeat-containing protein C10F6.04 (351 aa).

RCC1 repeat units lie at residues 1 to 48 (MLLS…LLDE), 50 to 106 (SQLW…IVHA), 108 to 162 (RRRV…CVTN), and 163 to 212 (EGNL…VLQE).

It localises to the cytoplasm. It is found in the nucleus. This chain is RCC1 repeat-containing protein C10F6.04, found in Schizosaccharomyces pombe (strain 972 / ATCC 24843) (Fission yeast).